Here is a 339-residue protein sequence, read N- to C-terminus: Uroporphyrinogen decarboxylase (339 aa).

Residues 21–25 (RQAGR), Asp-71, Tyr-147, Ser-202, and His-315 each bind substrate.

Belongs to the uroporphyrinogen decarboxylase family. Homodimer.

The protein resides in the cytoplasm. The catalysed reaction is uroporphyrinogen III + 4 H(+) = coproporphyrinogen III + 4 CO2. It participates in porphyrin-containing compound metabolism; protoporphyrin-IX biosynthesis; coproporphyrinogen-III from 5-aminolevulinate: step 4/4. Catalyzes the decarboxylation of four acetate groups of uroporphyrinogen-III to yield coproporphyrinogen-III. The chain is Uroporphyrinogen decarboxylase from Helicobacter pylori (strain Shi470).